A 370-amino-acid chain; its full sequence is tRNA-specific 2-thiouridylase MnmA (370 aa).

ATP contacts are provided by residues 19-26 (AMSGGVDS) and Leu-45. The active-site Nucleophile is Cys-113. A disulfide bridge connects residues Cys-113 and Cys-209. Gly-137 contacts ATP. The interaction with tRNA stretch occupies residues 159 to 161 (KDQ). Residue Cys-209 is the Cysteine persulfide intermediate of the active site.

The protein belongs to the MnmA/TRMU family.

The protein localises to the cytoplasm. It catalyses the reaction S-sulfanyl-L-cysteinyl-[protein] + uridine(34) in tRNA + AH2 + ATP = 2-thiouridine(34) in tRNA + L-cysteinyl-[protein] + A + AMP + diphosphate + H(+). Its function is as follows. Catalyzes the 2-thiolation of uridine at the wobble position (U34) of tRNA, leading to the formation of s(2)U34. The protein is tRNA-specific 2-thiouridylase MnmA of Rickettsia conorii (strain ATCC VR-613 / Malish 7).